The sequence spans 147 residues: Hemoglobin anodic subunit beta (147 aa).

In terms of domain architecture, Globin spans 2 to 147 (EWTEDERTAI…VTSALARQYH (146 aa)). Heme b-binding residues include His-63 and His-92.

This sequence belongs to the globin family. As to quaternary structure, heterotetramer of two alpha chains and two beta chains. As to expression, red blood cells.

In terms of biological role, involved in oxygen transport from gills to the various peripheral tissues. The chain is Hemoglobin anodic subunit beta (hbb1) from Anguilla anguilla (European freshwater eel).